The sequence spans 286 residues: MNPLFTQERRIFHKKLLDGNILATNNRGVVSNADGSNTRSFNIAKGIADLLHSETVSERLPGQTSGNAFEAICSEFVQSAFEKLQHIRPGDWNVKQVGSRNRLEIARYQQYAHLTALAKAAEENPELAAALGSDYTITPDIIVTRNLIADAEINRNEFLVDENIATYASLRAGNGNMPLLHASISCKWTIRSDRAQNARSEGLNLVRNRKGRLPHIVVVTAEPTPSRISSIALGTGEIDCVYHFALYELEQILQSLNYEDALDLFYIMVNGKRLKDISDLPLDLAV.

Mg(2+) is bound by residues aspartate 140 and cysteine 186.

In terms of assembly, homotetramer. It depends on Mg(2+) as a cofactor.

It catalyses the reaction Endonucleolytic cleavage of DNA to give specific double-stranded fragments with terminal 5'-phosphates.. A P subtype restriction enzyme that recognizes the double-stranded sequence 5'-GCCGGC-3' and cleaves after G-1. The polypeptide is Type II restriction enzyme NgoMIV (ngoMIVR) (Neisseria gonorrhoeae).